The sequence spans 476 residues: Ribulose bisphosphate carboxylase large chain (476 aa).

Residues asparagine 116 and threonine 166 each coordinate substrate. Catalysis depends on lysine 168, which acts as the Proton acceptor. Lysine 170 contacts substrate. Residues lysine 194, aspartate 196, and glutamate 197 each coordinate Mg(2+). Lysine 194 carries the N6-carboxylysine modification. Histidine 286 (proton acceptor) is an active-site residue. The substrate site is built by arginine 287, histidine 319, and serine 371.

This sequence belongs to the RuBisCO large chain family. Type I subfamily. As to quaternary structure, heterohexadecamer of 8 large chains and 8 small chains. It depends on Mg(2+) as a cofactor.

The enzyme catalyses 2 (2R)-3-phosphoglycerate + 2 H(+) = D-ribulose 1,5-bisphosphate + CO2 + H2O. It catalyses the reaction D-ribulose 1,5-bisphosphate + O2 = 2-phosphoglycolate + (2R)-3-phosphoglycerate + 2 H(+). Its function is as follows. RuBisCO catalyzes two reactions: the carboxylation of D-ribulose 1,5-bisphosphate, the primary event in carbon dioxide fixation, as well as the oxidative fragmentation of the pentose substrate. Both reactions occur simultaneously and in competition at the same active site. The polypeptide is Ribulose bisphosphate carboxylase large chain (Pseudonocardia dioxanivorans (strain ATCC 55486 / DSM 44775 / JCM 13855 / CB1190)).